The following is a 238-amino-acid chain: RAD9, HUS1, RAD1-interacting nuclear orphan protein 1 (238 aa).

A compositionally biased stretch (basic residues) spans M1–P10. Residues M1 to A31 form a disordered region. Position 51 is a phosphoserine; by PLK1 (S51). Positions S55–F61 match the RAD1-binding motif motif. The tract at residues K74–E105 is disordered. A compositionally biased stretch (basic residues) spans H75–R84. The D-box signature appears at R125–L132. Positions Q174–S178 match the KEN box motif.

Interacts (when phosphorylated by PLK1) with POLQ; promoting POLQ recruitment to DNA damage sites. Interacts with RAD1; interaction is direct and promotes association with the 9-1-1 (RAD9-RAD1-HUS1) complex. Interacts with RAD18. Interacts with TOPBP1. Interacts with UBE2N. In terms of processing, phosphorylated at Ser-51 by PLK1, promoting interaction with polymerase theta (POLQ). Post-translationally, ubiquitinated and degraded by the APC/C complex upon mitotic exit. Weakly expressed in testis, prostate, ovary, thymus and small intestine. Expressed strongly in breast cancer cells.

It is found in the nucleus. Its subcellular location is the chromosome. In terms of biological role, involved in microhomology-mediated end-joining (MMEJ) DNA repair by promoting recruitment of polymerase theta (POLQ) to DNA damage sites during mitosis. MMEJ is an alternative non-homologous end-joining (NHEJ) machinery that takes place during mitosis to repair double-strand breaks in DNA that originate in S-phase. Accumulates in M-phase; following phosphorylation by PLK1, interacts with POLQ, enabling its recruitment to double-strand breaks for subsequent repair. Also involved in the DNA damage response (DDR) signaling in response to genotoxic stresses such as ionizing radiation (IR) during the S phase. Recruited to sites of DNA damage through interaction with the 9-1-1 cell-cycle checkpoint response complex and TOPBP1 in a ATR-dependent manner. Required for the progression of the G1 to S phase transition. Plays a role in the stimulation of CHEK1 phosphorylation. This chain is RAD9, HUS1, RAD1-interacting nuclear orphan protein 1, found in Homo sapiens (Human).